The primary structure comprises 62 residues: Large ribosomal subunit protein bL28 (62 aa).

Belongs to the bacterial ribosomal protein bL28 family.

This chain is Large ribosomal subunit protein bL28, found in Staphylococcus haemolyticus (strain JCSC1435).